The following is a 256-amino-acid chain: Osteocalcin 2 (256 aa).

An N-terminal signal peptide occupies residues 1-18 (MKTLVLLSICALLSVCWS). Positions 19 to 209 (MGAVEPEVVV…LASVLLRRRR (191 aa)) are excised as a propeptide. Residues 38-186 (AAPADPAAAA…SSSSSSSSES (149 aa)) show a composition bias toward low complexity. Positions 38 to 193 (AAPADPAAAA…SESASDEAAK (156 aa)) are disordered. The region spanning 218–252 (PLQLESLREVCELNIACDEMAETAGIVAAYVAYYG) is the Gla domain. Ca(2+) is bound by residues Glu222, Glu226, Glu229, and Asp235. Glu222, Glu226, and Glu229 each carry 4-carboxyglutamate. The cysteines at positions 228 and 234 are disulfide-linked. Residue Glu236 is modified to 4-carboxyglutamate.

This sequence belongs to the osteocalcin/matrix Gla protein family. In terms of processing, gamma-carboxyglutamate residues are formed by vitamin K dependent carboxylation by GGCX. These residues are essential for the binding of calcium.

It is found in the secreted. Functionally, the carboxylated form is one of the main organic components of the bone matrix, which constitutes 1-2% of the total bone protein. The carboxylated form binds strongly to apatite and calcium. In Diplodus sargus (White seabream), this protein is Osteocalcin 2.